The sequence spans 142 residues: Coactosin-like protein (142 aa).

At Ala-2 the chain carries N-acetylalanine. Residues 2–130 enclose the ADF-H domain; sequence ATKIDKEACR…EEDFIRSELK (129 aa). Phosphoserine is present on Ser-23. The tract at residues 66–75 is flexible and important for F-actin binding; it reads TGDAMSKRSK. N6-acetyllysine is present on Lys-102. Ser-141 carries the post-translational modification Phosphoserine.

It belongs to the actin-binding proteins ADF family. Coactosin subfamily. Interacts with 5-lipoxygenase (ALOX5/5LO) in a calcium-independent manner. Binds to F-actin with a stoichiometry of 1:2.

The protein resides in the cytoplasm. It is found in the cytoskeleton. It localises to the nucleus. Functionally, binds to F-actin in a calcium-independent manner. Has no direct effect on actin depolymerization. Acts as a chaperone for ALOX5 (5LO), influencing both its stability and activity in leukotrienes synthesis. The sequence is that of Coactosin-like protein from Rattus norvegicus (Rat).